Here is a 92-residue protein sequence, read N- to C-terminus: RNA-binding protein Hfq (92 aa).

The Sm domain maps to 9-68; the sequence is DPYLNALRRERIPVSIYLVNGIKLQGQIESFDQFVILLKNTVSQMVYKHAISTVVPARSV. Polar residues predominate over residues 69–81; that stretch reads SHNNGGTSHTQQA. Residues 69–92 are disordered; the sequence is SHNNGGTSHTQQAPAVEAVADKAE.

This sequence belongs to the Hfq family. In terms of assembly, homohexamer.

Functionally, RNA chaperone that binds small regulatory RNA (sRNAs) and mRNAs to facilitate mRNA translational regulation in response to envelope stress, environmental stress and changes in metabolite concentrations. Also binds with high specificity to tRNAs. The chain is RNA-binding protein Hfq from Actinobacillus pleuropneumoniae serotype 5b (strain L20).